A 132-amino-acid polypeptide reads, in one-letter code: MNDTVTIRTRKFMTNRLLQRKQMVIDVLHPGKATVPKTEIREKLAKMYKTTPDVIFVFGFRTHFGGGKTTGFGMIYDSLDYAKKNEPKHRLAKHGLYEKKKTSRKQRKERKNRMKKVRGTAKANVGAGKKKD.

A compositionally biased stretch (basic and acidic residues) spans 90 to 100 (RLAKHGLYEKK). The interval 90–132 (RLAKHGLYEKKKTSRKQRKERKNRMKKVRGTAKANVGAGKKKD) is disordered. Residues 101–119 (KTSRKQRKERKNRMKKVRG) are compositionally biased toward basic residues.

The protein belongs to the eukaryotic ribosomal protein eS24 family. Component of the small ribosomal subunit. Part of the small subunit (SSU) processome, composed of more than 70 proteins and the RNA chaperone small nucleolar RNA (snoRNA) U3.

It localises to the cytoplasm. The protein resides in the nucleus. The protein localises to the nucleolus. Its function is as follows. Component of the small ribosomal subunit. The ribosome is a large ribonucleoprotein complex responsible for the synthesis of proteins in the cell. Required for processing of pre-rRNA and maturation of 40S ribosomal subunits. Part of the small subunit (SSU) processome, first precursor of the small eukaryotic ribosomal subunit. During the assembly of the SSU processome in the nucleolus, many ribosome biogenesis factors, an RNA chaperone and ribosomal proteins associate with the nascent pre-rRNA and work in concert to generate RNA folding, modifications, rearrangements and cleavage as well as targeted degradation of pre-ribosomal RNA by the RNA exosome. This Xenopus laevis (African clawed frog) protein is Small ribosomal subunit protein eS24 (rps24).